We begin with the raw amino-acid sequence, 481 residues long: Cerebral cavernous malformations 2 protein-like (481 aa).

Disordered stretches follow at residues 161–193 and 214–290; these read PVPA…GTAE and EARA…DPQN. Over residues 184 to 193 the composition is skewed to basic and acidic residues; sequence PEKRRVGTAE. Over residues 214-223 the composition is skewed to gly residues; the sequence is EARAAGGGGS. Positions 237–251 are enriched in basic and acidic residues; sequence WERRQTFSGSWERRH.

Belongs to the CCM2 family.

This chain is Cerebral cavernous malformations 2 protein-like (Ccm2l), found in Mus musculus (Mouse).